The chain runs to 519 residues: Protein BANP (519 aa).

3 positions are modified to phosphoserine: serine 19, serine 90, and serine 100. Residues 53-90 (IKTICLRLDSIEAKLQALEATCKSLEEKLDLVTNKQHS) are a coiled coil. Residue lysine 133 forms a Glycyl lysine isopeptide (Lys-Gly) (interchain with G-Cter in SUMO2) linkage. Residues 152–342 (NAVPGRRQNT…FSRRTPNSSS (191 aa)) are interaction with CUX1 and HDAC1. The span at 168–177 (GQEDSHHEDG) shows a compositional bias: basic and acidic residues. The segment at 168 to 196 (GQEDSHHEDGESGSEASDSVSSCGQAGSQ) is disordered. A compositionally biased stretch (low complexity) spans 180–189 (GSEASDSVSS). The region spanning 226 to 322 (EMRVRCAIIP…SKCRTAWRRK (97 aa)) is the BEN domain. N6-acetyllysine is present on lysine 275. The tract at residues 327–364 (SLAVKSFSRRTPNSSSYCPSEPMMSTPPPASELPQPQP) is disordered. Residues 335 to 344 (RRTPNSSSYC) are compositionally biased toward polar residues. A phosphothreonine mark is found at threonine 337 and threonine 352. Positions 342 to 393 (SYCPSEPMMSTPPPASELPQPQPQPQALHYALANAQQVQIHQIGEDGQVQVG) are DNA-binding. Pro residues predominate over residues 351–364 (STPPPASELPQPQP).

The protein belongs to the BANP/SMAR1 family. Part of a corepressor complex containing BANP, HDAC1, SIN3A, SIN3B, RBL1 and RBL2. Forms a trimeric complex in the nucleus consisting of BANP, HDAC6 and KHDRBS1/SAM68; HDAC6 keeps KHDRBS1 in a deacetylated state which inhibits the inclusion of CD44 alternate exons. The complex is disrupted by MAPK1/MAPK3-mediated phosphorylation of BANP which results in BANP export to the cytoplasm. This facilitates acetylation of KHDRBS1 and CD44 variant exon inclusion. Interacts with TP53. Interacts with CUX1/CDP. Interacts with HDAC1. Post-translationally, MAPK1/MAPK3-mediated phosphorylation at Thr-337 and Thr-352 results in export to the cytoplasm. In terms of tissue distribution, down-regulated in breast cancer cell lines.

It localises to the nucleus. Its subcellular location is the nucleus speckle. The protein localises to the cytoplasm. In terms of biological role, controls V(D)J recombination during T-cell development by repressing T-cell receptor (TCR) beta enhancer function. Binds to scaffold/matrix attachment region beta (S/MARbeta), an ATC-rich DNA sequence located upstream of the TCR beta enhancer. Represses cyclin D1 transcription by recruiting HDAC1 to its promoter, thereby diminishing H3K9ac, H3S10ph and H4K8ac levels. Promotes TP53 activation, which causes cell cycle arrest. Plays a role in the regulation of alternative splicing. Binds to CD44 pre-mRNA and negatively regulates the inclusion of CD44 proximal variable exons v2-v6 but has no effect on distal variable exons v7-v10. This Homo sapiens (Human) protein is Protein BANP (BANP).